Reading from the N-terminus, the 396-residue chain is Phosphoglycerate kinase (396 aa).

Residues 21-23, Arg-36, 59-62, Arg-113, and Arg-146 contribute to the substrate site; these read DLN and HLGR. Residues Lys-197, Glu-319, and 345–348 each bind ATP; that span reads GGDT.

This sequence belongs to the phosphoglycerate kinase family. As to quaternary structure, monomer.

The protein localises to the cytoplasm. It carries out the reaction (2R)-3-phosphoglycerate + ATP = (2R)-3-phospho-glyceroyl phosphate + ADP. It participates in carbohydrate degradation; glycolysis; pyruvate from D-glyceraldehyde 3-phosphate: step 2/5. The sequence is that of Phosphoglycerate kinase from Legionella pneumophila (strain Corby).